The following is a 324-amino-acid chain: MSERNAASARTVACLLGPTASGKTAAALALAARRPIEIVSVDSALVYRGMDIGTAKPTRDERAAVPHHLIDIVDPADAYSAAEFRADALRLVAQIAARGRTPLLAGGTMLYYRALTQGLNDLPAADPDVRATLDADAARDGWPALHARLAGIDPATAARLAPNDSQRIQRALEVYLLTGQPMSALLAAPPRDNDAAAGLRFVPVALEPSERAVLHARIAARFDAMLEAGFIDEVERLRRRDDLHLGLPSMRCVGYRQAWEYLDGCTDYRTMRDKGIFATRQLCKRQLTWLRAMPERIVVDCCAPDATVRAVDALERVLDGRAPA.

Residue Gly-17–Thr-24 participates in ATP binding. A substrate-binding site is contributed by Thr-19–Thr-24. Interaction with substrate tRNA stretches follow at residues Asp-42 to Leu-45, Gln-166 to Arg-170, and Arg-251 to Arg-256.

This sequence belongs to the IPP transferase family. In terms of assembly, monomer. The cofactor is Mg(2+).

It catalyses the reaction adenosine(37) in tRNA + dimethylallyl diphosphate = N(6)-dimethylallyladenosine(37) in tRNA + diphosphate. Its function is as follows. Catalyzes the transfer of a dimethylallyl group onto the adenine at position 37 in tRNAs that read codons beginning with uridine, leading to the formation of N6-(dimethylallyl)adenosine (i(6)A). In Burkholderia mallei (strain NCTC 10247), this protein is tRNA dimethylallyltransferase.